Here is a 255-residue protein sequence, read N- to C-terminus: 28.1 kDa virulence protein (255 aa).

The protein belongs to the SpvA family.

Its function is as follows. Not known. This protein is involved in the virulence of salmonellas. This Salmonella typhimurium protein is 28.1 kDa virulence protein (mkaB).